The chain runs to 98 residues: MNAERLMQVILAPVVTEKATFVAEKNQQIAFRVVADATKPEIKAAVELLFKVQVESVQVLNRKGKVKRFGRFVGRRRSERKAYVALKEGQEIDFAEVK.

Belongs to the universal ribosomal protein uL23 family. As to quaternary structure, part of the 50S ribosomal subunit. Contacts protein L29, and trigger factor when it is bound to the ribosome.

Functionally, one of the early assembly proteins it binds 23S rRNA. One of the proteins that surrounds the polypeptide exit tunnel on the outside of the ribosome. Forms the main docking site for trigger factor binding to the ribosome. The chain is Large ribosomal subunit protein uL23 from Bordetella petrii (strain ATCC BAA-461 / DSM 12804 / CCUG 43448).